A 128-amino-acid polypeptide reads, in one-letter code: Small ribosomal subunit protein uS11 (128 aa).

Belongs to the universal ribosomal protein uS11 family. In terms of assembly, part of the 30S ribosomal subunit. Interacts with proteins S7 and S18. Binds to IF-3.

Functionally, located on the platform of the 30S subunit, it bridges several disparate RNA helices of the 16S rRNA. Forms part of the Shine-Dalgarno cleft in the 70S ribosome. The protein is Small ribosomal subunit protein uS11 of Synechococcus sp. (strain JA-3-3Ab) (Cyanobacteria bacterium Yellowstone A-Prime).